An 88-amino-acid polypeptide reads, in one-letter code: Small ribosomal subunit protein uS15 (88 aa).

This sequence belongs to the universal ribosomal protein uS15 family. Part of the 30S ribosomal subunit. Forms a bridge to the 50S subunit in the 70S ribosome, contacting the 23S rRNA.

In terms of biological role, one of the primary rRNA binding proteins, it binds directly to 16S rRNA where it helps nucleate assembly of the platform of the 30S subunit by binding and bridging several RNA helices of the 16S rRNA. Forms an intersubunit bridge (bridge B4) with the 23S rRNA of the 50S subunit in the ribosome. The polypeptide is Small ribosomal subunit protein uS15 (Methylacidiphilum infernorum (isolate V4) (Methylokorus infernorum (strain V4))).